Reading from the N-terminus, the 356-residue chain is Heparan sulfate 2-O-sulfotransferase 1 (356 aa).

At 1–11 (MGLLRIMMPPK) the chain is on the cytoplasmic side. A helical; Signal-anchor for type II membrane protein membrane pass occupies residues 12–28 (LQLLAVVAFAVAMLFLE). Positions 24–51 (MLFLENQIQKLEESRSKLERAIARHEVR) form a coiled coil. Residues 29 to 356 (NQIQKLEESR…FYEKIYPKSN (328 aa)) are Lumenal-facing. Positions 83, 84, 85, 86, 87, and 88 each coordinate adenosine 3',5'-bisphosphate. Asn-108 and Asn-127 each carry an N-linked (GlcNAc...) asparagine glycan. Catalysis depends on residues His-140 and His-142. Arg-164 and Ser-172 together coordinate adenosine 3',5'-bisphosphate. 2 disulfide bridges follow: Cys-201–Cys-209 and Cys-222–Cys-228. Residues Tyr-279, Ser-285, Thr-290, and Lys-293 each coordinate adenosine 3',5'-bisphosphate.

It belongs to the sulfotransferase 3 family. As to quaternary structure, homotrimer. Interacts with the C5-epimerase GLCE. In terms of processing, N-glycosylated.

It is found in the golgi apparatus membrane. Its function is as follows. Catalyzes the transfer of a sulfo group from 3'-phospho-5'-adenylyl sulfate (PAPS) to the 2-OH position of iduronic acid (IdoA) or glucuronic acid (GlcA) within the heparan sulfate (HS) chain and participates in HS biosynthesis. Required for metanephric development of kidney formation, suggesting that 2-O-sulfation within HS is essential for signaling between ureteric bud and metanephric mesenchyme. This chain is Heparan sulfate 2-O-sulfotransferase 1, found in Homo sapiens (Human).